The sequence spans 146 residues: VHWTAEEKQLITGLWGKVNVDECGAEALARLLIVYPWTQRFFASFGNLATASAITGNAMVHAHGKKVLTSFGEAVKNLDNIKNTFAQLSELHCDKLHVDPENFKLLGDILIIVLAAHFGKDFTPDCQAAWKKLVRVVAHALARKYH.

A Globin domain is found at H2 to H146. Heme b contacts are provided by H63 and H92.

It belongs to the globin family. Heterotetramer of two alpha chains and two beta chains. As to expression, red blood cells.

In terms of biological role, involved in oxygen transport from the lung to the various peripheral tissues. The protein is Hemoglobin subunit beta (HBB) of Ciconia ciconia (White stork).